Reading from the N-terminus, the 525-residue chain is GMP synthase [glutamine-hydrolyzing] (525 aa).

Residues 9–207 (RILILDFGSQ…VLDICGCAAL (199 aa)) enclose the Glutamine amidotransferase type-1 domain. The active-site Nucleophile is Cys86. Active-site residues include His181 and Glu183. The GMPS ATP-PPase domain occupies 208 to 400 (WTPSNIVDDA…LGLPYDMVYR (193 aa)). 235 to 241 (SGGVDSS) serves as a coordination point for ATP.

In terms of assembly, homodimer.

It carries out the reaction XMP + L-glutamine + ATP + H2O = GMP + L-glutamate + AMP + diphosphate + 2 H(+). It functions in the pathway purine metabolism; GMP biosynthesis; GMP from XMP (L-Gln route): step 1/1. Its function is as follows. Catalyzes the synthesis of GMP from XMP. The polypeptide is GMP synthase [glutamine-hydrolyzing] (Pseudomonas aeruginosa (strain LESB58)).